The following is an 89-amino-acid chain: Antitoxin RelB (89 aa).

It belongs to the phD/YefM antitoxin family. As to quaternary structure, interacts with toxin RelE, which neutralizes its toxicity. Also interacts with toxins RelG and RelK in vitro, in M.smegmatis coexpression with non-cognate toxins neutralizes the toxicity of RelG while increasing the toxicity of RelK.

Its function is as follows. Antitoxin component of a type II toxin-antitoxin (TA) system. Upon expression in M.smegmatis neutralizes the effect of toxin RelE. Induces its own promoter, in combination with RelE represses its own promoter. Binds DNA in complex with toxin RelE but not alone. This Mycobacterium tuberculosis (strain ATCC 25618 / H37Rv) protein is Antitoxin RelB (relB).